The sequence spans 205 residues: Carboxysome shell protein CsoS1D (205 aa).

2 BMC circularly permuted domains span residues 3–100 (ELRT…TREY) and 106–205 (VVMW…TCRS). The Gates the pore signature appears at 68 to 69 (ER).

This sequence belongs to the EutL/PduB family. In terms of assembly, homotrimer. Forms a dimer of stacked trimers, the same faces interact. Probably forms a CsoS1-CsoS1D-CsoS2 complex.

It localises to the carboxysome. In terms of biological role, part of the carboxysome shell, a polyhedral inclusion where RuBisCO (ribulose bisphosphate carboxylase, cbbL-cbbS) is sequestered. It may control transport of RuBisCO reactants in and out of the carboxysome. This Hydrogenovibrio crunogenus (strain DSM 25203 / XCL-2) (Thiomicrospira crunogena) protein is Carboxysome shell protein CsoS1D.